The sequence spans 209 residues: Mitochondrial import inner membrane translocase subunit Tim23 (209 aa).

3 helical membrane passes run 73–93 (FELA…FGAM), 125–145 (ALWA…GVII), and 181–197 (GLAG…YNNW).

The protein belongs to the Tim17/Tim22/Tim23 family. In terms of assembly, component of the TIM23 complex at least composed of TIMM23, TIMM17 (TIMM17A or TIMM17B) and TIMM50; within this complex, directly interacts with TIMM50. The complex interacts with the TIMM44 component of the PAM complex and with DNAJC15. Upon mitochondrial depolarization, interacts with PINK1; the interaction is required for PINK1 accumulation at the outer mitochondrial membrane, kinase activation by autophosphorylation and PRKN recruitement to mitochondria.

It localises to the mitochondrion inner membrane. Essential component of the TIM23 complex, a complex that mediates the translocation of transit peptide-containing proteins across the mitochondrial inner membrane. Has a role in the activation of stress-induced mitophagy by protecting PINK1 from OMA1-mediated degradation and facilitating its accumulation at the outer mitochondrial membrane in response to depolarization. This Mus musculus (Mouse) protein is Mitochondrial import inner membrane translocase subunit Tim23 (Timm23).